The primary structure comprises 705 residues: Elongation factor G (705 aa).

The region spanning 8–294 (NLYRNFGIMA…AVIDYLPSPL (287 aa)) is the tr-type G domain. Residues 17-24 (AHIDAGKT), 92-96 (DTPGH), and 146-149 (NKMD) each bind GTP.

It belongs to the TRAFAC class translation factor GTPase superfamily. Classic translation factor GTPase family. EF-G/EF-2 subfamily.

It localises to the cytoplasm. Functionally, catalyzes the GTP-dependent ribosomal translocation step during translation elongation. During this step, the ribosome changes from the pre-translocational (PRE) to the post-translocational (POST) state as the newly formed A-site-bound peptidyl-tRNA and P-site-bound deacylated tRNA move to the P and E sites, respectively. Catalyzes the coordinated movement of the two tRNA molecules, the mRNA and conformational changes in the ribosome. The sequence is that of Elongation factor G from Ruegeria pomeroyi (strain ATCC 700808 / DSM 15171 / DSS-3) (Silicibacter pomeroyi).